The primary structure comprises 459 residues: tRNA modification GTPase MnmE (459 aa).

Residues Arg-23, Glu-88, and Arg-127 each coordinate (6S)-5-formyl-5,6,7,8-tetrahydrofolate. A TrmE-type G domain is found at 223–381; it reads GLDVVIVGKP…LKEYIKDLFF (159 aa). Asn-233 provides a ligand contact to K(+). GTP-binding positions include 233–238, 252–258, and 277–280; these read NVGKSS, TEIPGTT, and DTAG. Residue Ser-237 coordinates Mg(2+). Positions 252, 254, and 257 each coordinate K(+). Thr-258 serves as a coordination point for Mg(2+). Lys-459 is a (6S)-5-formyl-5,6,7,8-tetrahydrofolate binding site.

Belongs to the TRAFAC class TrmE-Era-EngA-EngB-Septin-like GTPase superfamily. TrmE GTPase family. In terms of assembly, homodimer. Heterotetramer of two MnmE and two MnmG subunits. K(+) serves as cofactor.

It is found in the cytoplasm. Exhibits a very high intrinsic GTPase hydrolysis rate. Involved in the addition of a carboxymethylaminomethyl (cmnm) group at the wobble position (U34) of certain tRNAs, forming tRNA-cmnm(5)s(2)U34. This chain is tRNA modification GTPase MnmE, found in Clostridium tetani (strain Massachusetts / E88).